A 286-amino-acid polypeptide reads, in one-letter code: 4-diphosphocytidyl-2-C-methyl-D-erythritol kinase (286 aa).

The active site involves Lys-11. Pro-93–Ser-103 lines the ATP pocket. Asp-135 is a catalytic residue.

The protein belongs to the GHMP kinase family. IspE subfamily.

It carries out the reaction 4-CDP-2-C-methyl-D-erythritol + ATP = 4-CDP-2-C-methyl-D-erythritol 2-phosphate + ADP + H(+). It functions in the pathway isoprenoid biosynthesis; isopentenyl diphosphate biosynthesis via DXP pathway; isopentenyl diphosphate from 1-deoxy-D-xylulose 5-phosphate: step 3/6. Catalyzes the phosphorylation of the position 2 hydroxy group of 4-diphosphocytidyl-2C-methyl-D-erythritol. This Prosthecochloris aestuarii (strain DSM 271 / SK 413) protein is 4-diphosphocytidyl-2-C-methyl-D-erythritol kinase.